A 213-amino-acid chain; its full sequence is Nicotinate-nucleotide adenylyltransferase (213 aa).

This sequence belongs to the NadD family.

It carries out the reaction nicotinate beta-D-ribonucleotide + ATP + H(+) = deamido-NAD(+) + diphosphate. It participates in cofactor biosynthesis; NAD(+) biosynthesis; deamido-NAD(+) from nicotinate D-ribonucleotide: step 1/1. Functionally, catalyzes the reversible adenylation of nicotinate mononucleotide (NaMN) to nicotinic acid adenine dinucleotide (NaAD). The sequence is that of Nicotinate-nucleotide adenylyltransferase from Salmonella typhimurium (strain LT2 / SGSC1412 / ATCC 700720).